Here is a 147-residue protein sequence, read N- to C-terminus: MSTGEAIPRVAVVVFILNGNSILLGRRRSSIGNSTFALPGGHLEFGESFEECAAREVMEETGLKIEKMKLLTVTNNVFKEAPTPSHYVSVSIRAVLVDPSQEPKNMEPEKCEGWDWYDWENLPKPLFWPLEKLFGSGFNPFTHGGGD.

Position 2 is an N-acetylserine (serine 2). Residues 7 to 140 enclose the Nudix hydrolase domain; sequence IPRVAVVVFI…EKLFGSGFNP (134 aa). Residues 41-62 carry the Nudix box motif; the sequence is GHLEFGESFEECAAREVMEETG. Residues glutamate 56 and glutamate 60 each coordinate Mg(2+).

This sequence belongs to the Nudix hydrolase family. Homodimer. Mg(2+) is required as a cofactor. The cofactor is Mn(2+). In terms of tissue distribution, expressed in roots, stems and leaves.

Its subcellular location is the cytoplasm. The enzyme catalyses 7,8-dihydroneopterin 3'-triphosphate + H2O = 7,8-dihydroneopterin 3'-phosphate + diphosphate + H(+). It carries out the reaction NAD(+) + H2O = beta-nicotinamide D-ribonucleotide + AMP + 2 H(+). The catalysed reaction is NADH + H2O = reduced beta-nicotinamide D-ribonucleotide + AMP + 2 H(+). It catalyses the reaction 8-oxo-dGTP + H2O = 8-oxo-dGMP + diphosphate + H(+). Functionally, mediates the hydrolysis of some nucleoside diphosphate derivatives. Its substrate specificity is unclear. In vitro, it can use NTP, dNTP, 8-oxo-GTP, 8-oxo-dGTP, dGTP, dATP, dTTP or dihydroneopterin triphosphate (DHNTP) as substrate. Has some NADH pyrophosphatase activity in vitro; however, such activity may not be relevant in vivo due to the high concentration of manganese used during the experiments. Plays an important role in protection against oxidative DNA and RNA damage by removing oxidatively damaged form of guanine. The sequence is that of Nudix hydrolase 1 (NUDT1) from Arabidopsis thaliana (Mouse-ear cress).